We begin with the raw amino-acid sequence, 988 residues long: Transposase for transposon Tn21 (988 aa).

Residues 672–696 (GDGTTSSSDEQNFRTASKAKSTGHI) are disordered. The span at 674–695 (GTTSSSDEQNFRTASKAKSTGH) shows a compositional bias: polar residues.

It belongs to the transposase 7 family.

In terms of biological role, required for transposition of transposon Tn21. In Escherichia coli, this protein is Transposase for transposon Tn21 (tnpA).